The following is a 425-amino-acid chain: Orexin/Hypocretin receptor type 1 (425 aa).

The Extracellular segment spans residues 1-46 (MEPSATPGPQMGVPTGVGDPSLVPPDYEEEFLSYLWRDYLYPKQYE). The required for response to orexin-A stretch occupies residues 26-41 (DYEEEFLSYLWRDYLY). The helical transmembrane segment at 47–67 (WVLIAAYVAVFLVALVGNTLV) threads the bilayer. The Cytoplasmic portion of the chain corresponds to 68 to 82 (CLAVWRNHHMRTVTN). A helical transmembrane segment spans residues 83–105 (YFIVNLSLADVLVTAICLPASLL). The Extracellular portion of the chain corresponds to 106 to 119 (VDITESWLFGHALC). C119 and C202 are oxidised to a cystine. The chain crosses the membrane as a helical span at residues 120-140 (KVIPYLQAVSVSVAVLTLSFI). The Cytoplasmic portion of the chain corresponds to 141–160 (ALDRWYAIYHPLLFKSTARR). A helical transmembrane segment spans residues 161–182 (ARGSILGIWAVSPAVMVPQAAV). Residues 183–213 (MECSSVLPELANRTRLFSVCDERWADDLYPK) lie on the Extracellular side of the membrane. A helical membrane pass occupies residues 214-235 (IYHSCFFIVTYLAPLGLMAMAY). Residues 236–298 (FQIFRKLWGR…QMRARRKTAK (63 aa)) lie on the Cytoplasmic side of the membrane. The chain crosses the membrane as a helical span at residues 299–321 (MLMVVLLVFALCYLPISVLNVLK). Residues 322-336 (RVFGMFRQTSDREAV) lie on the Extracellular side of the membrane. The chain crosses the membrane as a helical span at residues 337–360 (YACFTFSHWLVYANSAANPIIYNF). Over 361 to 425 (LSGKFREQFK…VLTSVTTVLP (65 aa)) the chain is Cytoplasmic.

It belongs to the G-protein coupled receptor 1 family.

The protein resides in the cell membrane. Its function is as follows. Moderately selective excitatory receptor for orexin-A and, with a lower affinity, for orexin-B neuropeptide. Triggers an increase in cytoplasmic Ca(2+) levels in response to orexin-A binding. The protein is Orexin/Hypocretin receptor type 1 of Sus scrofa (Pig).